A 134-amino-acid chain; its full sequence is Proline-rich nuclear receptor coactivator 2 (134 aa).

The disordered stretch occupies residues 1-74 (MGGGERYNIP…NNSNWNASLS (74 aa)). Polar residues-rich tracts occupy residues 11–24 (DPQS…QQQH) and 52–61 (SAVQNGGKTK). The segment covering 62–74 (SLSNNSNWNASLS) has biased composition (low complexity). An SH3-binding motif is present at residues 94 to 100 (SEPPSPS).

Belongs to the PNRC family. PNRC2 subfamily. Interacts with UPF1/RENT1; preferentially interacts with hyperphosphorylated form. Interacts with DCP1A. Interacts with many nuclear receptors including ESR1, ESRRA, ESRRG, NR3C1/GR, NR5A1, PGR, TR, RAR and RXR.

Its subcellular location is the nucleus. It localises to the cytoplasm. It is found in the P-body. In terms of biological role, involved in nonsense-mediated mRNA decay (NMD) by acting as a bridge between the mRNA decapping complex and the NMD machinery. May act by targeting the NMD machinery to the P-body and recruiting the decapping machinery to aberrant mRNAs. Required for UPF1/RENT1 localization to the P-body. Plays a role in glucocorticoid receptor-mediated mRNA degradation by interacting with the glucocorticoid receptor NR3C1 in a ligand-dependent manner when it is bound to the 5' UTR of target mRNAs and recruiting the RNA helicase UPF1 and the mRNA-decapping enzyme DCP1A, leading to RNA decay. Also acts as a nuclear receptor coactivator. May play a role in controlling the energy balance between energy storage and energy expenditure. This chain is Proline-rich nuclear receptor coactivator 2 (Pnrc2), found in Rattus norvegicus (Rat).